We begin with the raw amino-acid sequence, 151 residues long: MELDIKAIMERLPHRYPMLLVDRVLDIVPGKSIVAIKNVSINEPFFEGHFPHHPVMPGVLITEAMAQAAALFSFTDDDGGLKCDSAKTAYYLVGIDEARFRRPVVPGDQLRLEVQAERLSRAICKYQARALVDGQIVAEAKLMCAIRSLEA.

The active site involves His-49.

This sequence belongs to the thioester dehydratase family. FabZ subfamily.

The protein localises to the cytoplasm. It carries out the reaction a (3R)-hydroxyacyl-[ACP] = a (2E)-enoyl-[ACP] + H2O. In terms of biological role, involved in unsaturated fatty acids biosynthesis. Catalyzes the dehydration of short chain beta-hydroxyacyl-ACPs and long chain saturated and unsaturated beta-hydroxyacyl-ACPs. The protein is 3-hydroxyacyl-[acyl-carrier-protein] dehydratase FabZ of Bordetella petrii (strain ATCC BAA-461 / DSM 12804 / CCUG 43448).